A 905-amino-acid chain; its full sequence is A disintegrin and metalloproteinase with thrombospondin motifs 8 (905 aa).

A signal peptide spans 1 to 28 (MLRDPTTTGWPPLLLLLLQLPPPPLVCG). Residues 29–228 (APAGPGTGAQ…PFGSKTRSKR (200 aa)) constitute a propeptide that is removed on maturation. 2 disordered regions span residues 139 to 163 (PQGA…RRED) and 186 to 225 (NGQG…SKTR). Basic and acidic residues predominate over residues 191–215 (ERSDNEEDRKQDKEGLLKETEDSRK). Residues 234–444 (RFVETLLVAD…GHGDCLLDAP (211 aa)) form the Peptidase M12B domain. 10 disulfides stabilise this stretch: Cys-309-Cys-362, Cys-338-Cys-344, Cys-356-Cys-439, Cys-394-Cys-423, Cys-478-Cys-502, Cys-487-Cys-523, Cys-517-Cys-528, Cys-554-Cys-591, Cys-558-Cys-596, and Cys-569-Cys-581. His-378 contributes to the Zn(2+) binding site. The active site involves Glu-379. 2 residues coordinate Zn(2+): His-382 and His-388. Residues Asn-415, Asn-480, and Asn-506 are each glycosylated (N-linked (GlcNAc...) asparagine). The Disintegrin domain maps to 453–541 (GLPGHSTLYE…EDVENPKAVV (89 aa)). Residues 542-597 (DGDWGPWRPWGQCSRTCGGGIQFSNRECDNPMPQNGGRFCLGERVKYQSCNTEECP) enclose the TSP type-1 1 domain. A glycan (N-linked (GlcNAc...) asparagine) is linked at Asn-615. The interval 706–847 (RKISGSFTPF…RATTNIIQSL (142 aa)) is spacer. Positions 848–904 (PSAEWVLGDWSECPSTCRGSWQRRTVECRDPSGQASDTCDEALKPEDAKPCGSQPCP) constitute a TSP type-1 2 domain. Residues 877 to 905 (DPSGQASDTCDEALKPEDAKPCGSQPCPL) are disordered.

The cofactor is Zn(2+). Post-translationally, the precursor is cleaved by a furin endopeptidase. Glycosylated. Can be O-fucosylated by POFUT2 on a serine or a threonine residue found within the consensus sequence C1-X(2)-(S/T)-C2-G of the TSP type-1 repeat domains where C1 and C2 are the first and second cysteine residue of the repeat, respectively. Fucosylated repeats can then be further glycosylated by the addition of a beta-1,3-glucose residue by the glucosyltransferase, B3GALTL. Fucosylation mediates the efficient secretion of ADAMTS family members. Can also be C-glycosylated with one or two mannose molecules on tryptophan residues within the consensus sequence W-X-X-W of the TPRs, and N-glycosylated. These other glycosylations can also facilitate secretion. As to expression, expressed specifically in adult lung and heart and low expression during mouse development.

The protein localises to the secreted. The protein resides in the extracellular space. Its subcellular location is the extracellular matrix. Its function is as follows. Has anti-angiogenic properties. The chain is A disintegrin and metalloproteinase with thrombospondin motifs 8 (Adamts8) from Mus musculus (Mouse).